The primary structure comprises 663 residues: UvrABC system protein B (663 aa).

Residues 31 to 188 (DNIEGGEKAQ…NDLVDIQFER (158 aa)) form the Helicase ATP-binding domain. Position 44-51 (44-51 (GATGTGKT)) interacts with ATP. A Beta-hairpin motif is present at residues 97–120 (YYDYYQPEAYVPSSDTYIEKDSSV). The region spanning 435–601 (QMDDLLGEIN…TIKKDIRDLI (167 aa)) is the Helicase C-terminal domain. In terms of domain architecture, UVR spans 627–662 (QEAIKKLQKQMQEAAELLDFELAAQIRDMVLELKAM).

The protein belongs to the UvrB family. In terms of assembly, forms a heterotetramer with UvrA during the search for lesions. Interacts with UvrC in an incision complex.

It localises to the cytoplasm. Functionally, the UvrABC repair system catalyzes the recognition and processing of DNA lesions. A damage recognition complex composed of 2 UvrA and 2 UvrB subunits scans DNA for abnormalities. Upon binding of the UvrA(2)B(2) complex to a putative damaged site, the DNA wraps around one UvrB monomer. DNA wrap is dependent on ATP binding by UvrB and probably causes local melting of the DNA helix, facilitating insertion of UvrB beta-hairpin between the DNA strands. Then UvrB probes one DNA strand for the presence of a lesion. If a lesion is found the UvrA subunits dissociate and the UvrB-DNA preincision complex is formed. This complex is subsequently bound by UvrC and the second UvrB is released. If no lesion is found, the DNA wraps around the other UvrB subunit that will check the other stand for damage. The chain is UvrABC system protein B from Streptococcus mutans serotype c (strain ATCC 700610 / UA159).